Here is a 305-residue protein sequence, read N- to C-terminus: Aspartate carbamoyltransferase catalytic subunit (305 aa).

The carbamoyl phosphate site is built by Arg56 and Thr57. Lys84 provides a ligand contact to L-aspartate. Residues Arg106, His136, and Gln139 each contribute to the carbamoyl phosphate site. Arg169 and Arg221 together coordinate L-aspartate. Carbamoyl phosphate is bound by residues Ala262 and Pro263.

Belongs to the aspartate/ornithine carbamoyltransferase superfamily. ATCase family. As to quaternary structure, heterododecamer (2C3:3R2) of six catalytic PyrB chains organized as two trimers (C3), and six regulatory PyrI chains organized as three dimers (R2).

It carries out the reaction carbamoyl phosphate + L-aspartate = N-carbamoyl-L-aspartate + phosphate + H(+). It functions in the pathway pyrimidine metabolism; UMP biosynthesis via de novo pathway; (S)-dihydroorotate from bicarbonate: step 2/3. Its function is as follows. Catalyzes the condensation of carbamoyl phosphate and aspartate to form carbamoyl aspartate and inorganic phosphate, the committed step in the de novo pyrimidine nucleotide biosynthesis pathway. This Streptococcus sanguinis (strain SK36) protein is Aspartate carbamoyltransferase catalytic subunit.